The primary structure comprises 453 residues: tRNA modification GTPase MnmE (453 aa).

Positions 22, 79, and 119 each coordinate (6S)-5-formyl-5,6,7,8-tetrahydrofolate. Positions 215–376 (GMKVVIAGRP…LKQHLKSLMG (162 aa)) constitute a TrmE-type G domain. Asparagine 225 is a K(+) binding site. Residues 225–230 (NAGKSS), 244–250 (TEIAGTT), 269–272 (DTAG), and 334–337 (NKAD) contribute to the GTP site. Serine 229 contacts Mg(2+). 3 residues coordinate K(+): threonine 244, isoleucine 246, and threonine 249. Threonine 250 contacts Mg(2+). Residue lysine 453 coordinates (6S)-5-formyl-5,6,7,8-tetrahydrofolate.

This sequence belongs to the TRAFAC class TrmE-Era-EngA-EngB-Septin-like GTPase superfamily. TrmE GTPase family. In terms of assembly, homodimer. Heterotetramer of two MnmE and two MnmG subunits. Requires K(+) as cofactor.

The protein localises to the cytoplasm. Functionally, exhibits a very high intrinsic GTPase hydrolysis rate. Involved in the addition of a carboxymethylaminomethyl (cmnm) group at the wobble position (U34) of certain tRNAs, forming tRNA-cmnm(5)s(2)U34. The polypeptide is tRNA modification GTPase MnmE (Shewanella sp. (strain MR-7)).